Consider the following 72-residue polypeptide: Mitotic-spindle organizing protein 1 (72 aa).

It belongs to the MOZART1 family. As to quaternary structure, part of the gamma-tubulin complex.

Its subcellular location is the cytoplasm. It localises to the cytoskeleton. The protein resides in the microtubule organizing center. It is found in the centrosome. The protein localises to the spindle. Required for gamma-tubulin complex recruitment to the centrosome. This is Mitotic-spindle organizing protein 1 (mzt1) from Xenopus laevis (African clawed frog).